Reading from the N-terminus, the 295-residue chain is Urease accessory protein UreD (295 aa).

The protein belongs to the UreD family. UreD, UreF and UreG form a complex that acts as a GTP-hydrolysis-dependent molecular chaperone, activating the urease apoprotein by helping to assemble the nickel containing metallocenter of UreC. The UreE protein probably delivers the nickel.

Its subcellular location is the cytoplasm. In terms of biological role, required for maturation of urease via the functional incorporation of the urease nickel metallocenter. In Ralstonia nicotianae (strain ATCC BAA-1114 / GMI1000) (Ralstonia solanacearum), this protein is Urease accessory protein UreD.